Reading from the N-terminus, the 319-residue chain is Tetrahydromethanopterin S-methyltransferase subunit H (319 aa).

This sequence belongs to the MtrH family. As to quaternary structure, the complex is composed of 8 subunits; MtrA, MtrB, MtrC, MtrD, MtrE, MtrF, MtrG and MtrH.

The enzyme catalyses 5-methyl-5,6,7,8-tetrahydromethanopterin + coenzyme M + 2 Na(+)(in) = 5,6,7,8-tetrahydromethanopterin + methyl-coenzyme M + 2 Na(+)(out). It participates in one-carbon metabolism; methanogenesis from CO(2); methyl-coenzyme M from 5,10-methylene-5,6,7,8-tetrahydromethanopterin: step 2/2. Functionally, part of a complex that catalyzes the formation of methyl-coenzyme M and tetrahydromethanopterin from coenzyme M and methyl-tetrahydromethanopterin. This is an energy-conserving, sodium-ion translocating step. MtrH catalyzes the transfer of the methyl group from methyl-tetrahydromethanopterin to the corrinoid prosthetic group of MtrA. This chain is Tetrahydromethanopterin S-methyltransferase subunit H, found in Methanococcus maripaludis (strain DSM 14266 / JCM 13030 / NBRC 101832 / S2 / LL).